A 619-amino-acid polypeptide reads, in one-letter code: (-)-camphene synthase, chloroplastic (619 aa).

Residues 1–47 (MALVSVAPLVSMRRSLFSSPYELKSIDKTIPNLVMCRKRMSGTPSIR) constitute a chloroplast transit peptide. Mg(2+) is bound by residues aspartate 370, aspartate 374, and aspartate 522. A DDXXD motif motif is present at residues 370–374 (DDIYD).

It belongs to the terpene synthase family. Tpsd subfamily. It depends on Mg(2+) as a cofactor. Mn(2+) serves as cofactor.

The protein resides in the plastid. Its subcellular location is the chloroplast. The enzyme catalyses (2E)-geranyl diphosphate = (1S,4R)-camphene + diphosphate. It catalyses the reaction (2E)-geranyl diphosphate = (1R,5R)-alpha-pinene + diphosphate. The catalysed reaction is (2E)-geranyl diphosphate = tricyclene + diphosphate. It carries out the reaction (2E)-geranyl diphosphate = beta-myrcene + diphosphate. The enzyme catalyses (2E)-geranyl diphosphate = (1S,5S)-beta-pinene + diphosphate. It catalyses the reaction (2E)-geranyl diphosphate = (1S,5S)-alpha-pinene + diphosphate. Its pathway is terpene metabolism; oleoresin biosynthesis. It functions in the pathway secondary metabolite biosynthesis; terpenoid biosynthesis. In terms of biological role, monoterpene synthase (TPS) involved in the biosynthesis of monoterpene natural products included in conifer oleoresin secretions and volatile emissions; these compounds contribute to biotic and abiotic stress defense against herbivores and pathogens. Catalyzes the conversion of (2E)-geranyl diphosphate (GPP) to (-)-camphene, (+)-alpha-pinene and (-)-alpha-pinene, and, to a lower extent, to tricyclene, myrcene and (-)-beta-pinene. The protein is (-)-camphene synthase, chloroplastic of Pinus contorta (Shore pine).